Here is a 788-residue protein sequence, read N- to C-terminus: Protein translocase subunit SecA 2 (788 aa).

ATP contacts are provided by residues Q86, 104–108 (GEGKT), and D493.

Belongs to the SecA family. Monomer and homodimer. Part of the essential Sec protein translocation apparatus which comprises SecA, SecYEG and auxiliary proteins SecDF. Other proteins may also be involved.

The protein resides in the cell membrane. The protein localises to the cytoplasm. It carries out the reaction ATP + H2O + cellular proteinSide 1 = ADP + phosphate + cellular proteinSide 2.. Its function is as follows. Part of the Sec protein translocase complex. Interacts with the SecYEG preprotein conducting channel. Has a central role in coupling the hydrolysis of ATP to the transfer of proteins into and across the cell membrane, serving as an ATP-driven molecular motor driving the stepwise translocation of polypeptide chains across the membrane. The sequence is that of Protein translocase subunit SecA 2 from Bacillus anthracis.